A 438-amino-acid polypeptide reads, in one-letter code: Putative ZDHHC-type palmitoyltransferase 7 (438 aa).

N-linked (GlcNAc...) asparagine glycosylation is found at N12 and N13. The next 2 helical transmembrane spans lie at 48-68 (IFCLVHFIVYCVIIFRKGTIL) and 77-97 (YFYLIWTHCVFFFAIGTYFLI). N-linked (GlcNAc...) asparagine glycans are attached at residues N119, N144, and N157. The tract at residues 183 to 239 (EDSINDDTITTTTTTTTTTSTSTIPEISNDDDDNNNENNNDNVNNRNNNNSNGEKED) is disordered. 2 stretches are compositionally biased toward low complexity: residues 190 to 206 (TITTTTTTTTTTSTSTI) and 218 to 234 (NENNNDNVNNRNNNNSN). An N-linked (GlcNAc...) asparagine glycan is attached at N231. Residues 249–299 (YFCKKCLVDIPLRTKHCVKCNRCVLKYDHHCVFIGGCVGLNNHKNFLLFLL) form the DHHC domain. 2 helical membrane passes run 294–314 (FLLFLLAESLLLLLGLRIIVT) and 330–350 (IAIIPPTLLIFGGLCMPFALF). Residue N360 is glycosylated (N-linked (GlcNAc...) asparagine).

This sequence belongs to the DHHC palmitoyltransferase family.

The protein resides in the membrane. It carries out the reaction L-cysteinyl-[protein] + hexadecanoyl-CoA = S-hexadecanoyl-L-cysteinyl-[protein] + CoA. This Dictyostelium discoideum (Social amoeba) protein is Putative ZDHHC-type palmitoyltransferase 7.